We begin with the raw amino-acid sequence, 549 residues long: GATA-type transcription factor sreA (549 aa).

The disordered stretch occupies residues alanine 40–serine 100. Basic and acidic residues-rich tracts occupy residues glycine 43 to glutamate 72 and histidine 86 to lysine 97. A GATA-type 1 zinc finger spans residues cysteine 106 to cysteine 130. The interval arginine 141–glutamate 174 is disordered. Residues cysteine 180–cysteine 198 form a cystein-rich region (CRR) region. The segment at glycine 223–glutamate 244 is disordered. The segment at cysteine 251–cysteine 275 adopts a GATA-type 2 zinc-finger fold. 3 disordered regions span residues arginine 306–leucine 332, asparagine 375–serine 459, and leucine 482–glutamine 535. The segment covering serine 309–threonine 331 has biased composition (low complexity). Over residues histidine 383–proline 396 the composition is skewed to pro residues. Positions glutamine 485–proline 497 are enriched in low complexity. Residues leucine 498 to aspartate 515 are compositionally biased toward polar residues. The stretch at valine 511–glutamine 549 forms a coiled coil. A compositionally biased stretch (basic and acidic residues) spans asparagine 516–glutamine 535.

Its subcellular location is the nucleus. Its function is as follows. GATA-type transcription repressor that regulates iron- acquisition genes through specific binding GATA sequence elements of target promoters. Iron acquisition regulation is critical for survival under both iron-limiting conditions (to acquire essential iron) and iron-replete conditions (to limit iron toxicity). SreA targets include genes encoding a number of key iron-regulated factors such as those involved in siderophore biosynthesis. The sequence is that of GATA-type transcription factor sreA from Emericella nidulans (strain FGSC A4 / ATCC 38163 / CBS 112.46 / NRRL 194 / M139) (Aspergillus nidulans).